Consider the following 128-residue polypeptide: Large ribosomal subunit protein uL22 (128 aa).

The protein belongs to the universal ribosomal protein uL22 family. As to quaternary structure, part of the 50S ribosomal subunit.

Its function is as follows. This protein binds specifically to 23S rRNA; its binding is stimulated by other ribosomal proteins, e.g. L4, L17, and L20. It is important during the early stages of 50S assembly. It makes multiple contacts with different domains of the 23S rRNA in the assembled 50S subunit and ribosome. The globular domain of the protein is located near the polypeptide exit tunnel on the outside of the subunit, while an extended beta-hairpin is found that lines the wall of the exit tunnel in the center of the 70S ribosome. This chain is Large ribosomal subunit protein uL22, found in Prochlorococcus marinus (strain MIT 9301).